Consider the following 294-residue polypeptide: Nucleotide-binding protein LVIS_0651 (294 aa).

Residue 12–19 (GMSGAGKT) coordinates ATP. 62-65 (DLRS) lines the GTP pocket.

This sequence belongs to the RapZ-like family.

Functionally, displays ATPase and GTPase activities. This chain is Nucleotide-binding protein LVIS_0651, found in Levilactobacillus brevis (strain ATCC 367 / BCRC 12310 / CIP 105137 / JCM 1170 / LMG 11437 / NCIMB 947 / NCTC 947) (Lactobacillus brevis).